The chain runs to 438 residues: Probable 26S proteasome regulatory subunit rpn-6.1 (438 aa).

The segment covering Met1 to Thr10 has biased composition (basic and acidic residues). The interval Met1–Ser30 is disordered. The 170-residue stretch at Asp239–Val408 folds into the PCI domain.

Belongs to the proteasome subunit S9 family. Component of the lid subcomplex of the 19S proteasome regulatory particle complex (also named PA700 complex). The 26S proteasome consists of a 20S proteasome core and two 19S regulatory subunits.

In terms of biological role, component of the lid subcomplex of the 26S proteasome, a multiprotein complex involved in the ATP-dependent degradation of ubiquitinated proteins. In the complex, rpn-6.1 is required for proteasome assembly. Plays a key role in increased proteasome activity in response to proteotoxic stress: induced by daf-16, promoting enhanced assembly of the 26S proteasome and higher proteasome activity, leading to extended lifespan. This chain is Probable 26S proteasome regulatory subunit rpn-6.1, found in Caenorhabditis elegans.